Here is a 180-residue protein sequence, read N- to C-terminus: UPF0340 protein RBAM_034070 (180 aa).

It belongs to the UPF0340 family.

This is UPF0340 protein RBAM_034070 from Bacillus velezensis (strain DSM 23117 / BGSC 10A6 / LMG 26770 / FZB42) (Bacillus amyloliquefaciens subsp. plantarum).